The chain runs to 284 residues: Flavin-dependent thymidylate synthase (284 aa).

One can recognise a ThyX domain in the interval 27 to 237 (GFIRVVDYMG…PLAYNAFVEY (211 aa)). FAD contacts are provided by residues Thr73, 96–98 (RHR), and Glu104. DUMP is bound by residues 93–96 (QWIR) and 104–108 (EYSAR). Residues 96 to 106 (RHRTANVNEYS) carry the ThyX motif motif. Positions 122–142 (EQVAKQSDNNKQGSGEAFDPD) are disordered. The span at 125–134 (AKQSDNNKQG) shows a compositional bias: polar residues. Position 176 (Arg176) interacts with dUMP. Residues 192-194 (DLH) and His198 contribute to the FAD site. Arg203 is a dUMP binding site. The Involved in ionization of N3 of dUMP, leading to its activation role is filled by Arg203.

Belongs to the thymidylate synthase ThyX family. In terms of assembly, homotetramer. FAD serves as cofactor.

It catalyses the reaction dUMP + (6R)-5,10-methylene-5,6,7,8-tetrahydrofolate + NADPH + H(+) = dTMP + (6S)-5,6,7,8-tetrahydrofolate + NADP(+). It functions in the pathway pyrimidine metabolism; dTTP biosynthesis. In terms of biological role, catalyzes the reductive methylation of 2'-deoxyuridine-5'-monophosphate (dUMP) to 2'-deoxythymidine-5'-monophosphate (dTMP) while utilizing 5,10-methylenetetrahydrofolate (mTHF) as the methyl donor, and NADPH and FADH(2) as the reductant. In Wolbachia pipientis wMel, this protein is Flavin-dependent thymidylate synthase.